A 242-amino-acid chain; its full sequence is ATP synthase subunit a (242 aa).

6 consecutive transmembrane segments (helical) span residues 29 to 49 (SSIYMLLASILALTYFYLAFY), 84 to 104 (FIPLVFSLFIFILFCNLLGMT), 114 to 134 (IIVTFTLAILVFLIVTIVGFV), 140 to 160 (FLTLFLPHGTPLWLAPLIIVI), 181 to 201 (MAGHVLLKVIAGFTVSLMIYL), and 203 to 223 (FLPIPIMVILIGFEIFVAILQ).

Belongs to the ATPase A chain family. F-type ATPases have 2 components, CF(1) - the catalytic core - and CF(0) - the membrane proton channel. CF(1) has five subunits: alpha(3), beta(3), gamma(1), delta(1), epsilon(1). CF(0) has three main subunits: a(1), b(2) and c(9-12). The alpha and beta chains form an alternating ring which encloses part of the gamma chain. CF(1) is attached to CF(0) by a central stalk formed by the gamma and epsilon chains, while a peripheral stalk is formed by the delta and b chains.

It is found in the cell inner membrane. Key component of the proton channel; it plays a direct role in the translocation of protons across the membrane. The chain is ATP synthase subunit a from Rickettsia peacockii (strain Rustic).